Reading from the N-terminus, the 184-residue chain is Photosystem I assembly protein Ycf4 (184 aa).

Transmembrane regions (helical) follow at residues F22 to S42 and I57 to S77.

It belongs to the Ycf4 family.

It is found in the plastid. The protein resides in the chloroplast thylakoid membrane. Functionally, seems to be required for the assembly of the photosystem I complex. This chain is Photosystem I assembly protein Ycf4, found in Chloranthus spicatus (Chulantree).